Consider the following 386-residue polypeptide: MNEVVIVDCIRTPMGRSKAGVFRNVRAEALSAHLMKQILVRNPALNPEDIEDVIWGCVKQTKEQGFNIARNASLLAGLPKSIGGVTVNRLCGSSMEALHQASTSIMSGQGDVFLIGGVEHMGHVPMMYDVDFDPALNKNIALASGNMGLTAELLGKQHGITREMQDAFGARSHQKAHEAHLAGRWDNEIVATQGHDATGALTLVEHDEVIRPETTAESLSALRPVFDPVNGTVTAGTSSALSDGASAMLVMSAAKAKELGLTPRVKIRGMAVAGCDPATMGFGPVPATKKALKRAGLSIADIELFEFNEAFAAQALSCVRSLKVEDKMDQINLNGGAIALGHPLGCSGSRISGTLINLMEGQDVNIGLATMCIGLGQGIATVFERV.

Catalysis depends on C91, which acts as the Acyl-thioester intermediate. Catalysis depends on proton acceptor residues H342 and C372.

Belongs to the thiolase-like superfamily. Thiolase family. Heterotetramer of two alpha chains (FadB) and two beta chains (FadA).

The protein resides in the cytoplasm. The catalysed reaction is an acyl-CoA + acetyl-CoA = a 3-oxoacyl-CoA + CoA. The protein operates within lipid metabolism; fatty acid beta-oxidation. In terms of biological role, catalyzes the final step of fatty acid oxidation in which acetyl-CoA is released and the CoA ester of a fatty acid two carbons shorter is formed. The polypeptide is 3-ketoacyl-CoA thiolase (Colwellia psychrerythraea (strain 34H / ATCC BAA-681) (Vibrio psychroerythus)).